Reading from the N-terminus, the 183-residue chain is Proton-transporting V-type ATPase complex assembly regulator TMEM9 (183 aa).

The N-terminal stretch at 1 to 20 (MKLLCLVAVVGCLLVPPAQA) is a signal peptide. 3 N-linked (GlcNAc...) asparagine glycosylation sites follow: asparagine 21, asparagine 38, and asparagine 47. The Extracellular portion of the chain corresponds to 21–89 (NKSSEDIRCK…YEERSTTTIK (69 aa)). Residues 90–110 (VIIVIYLSVVGALLLYMAFLM) traverse the membrane as a helical segment. The Cytoplasmic segment spans residues 111–183 (LVDPLIRKPD…TVFDRHKMLS (73 aa)). Serine 144 carries the post-translational modification Phosphoserine.

Belongs to the TMEM9 family. In terms of assembly, interacts with the v-ATPase accessory protein ATP6AP2 and with the v-ATPase complex subunit ATP6V0D1; these interactions lead to the assembly of the v-ATPase complex. Post-translationally, N-glycosylated. As to expression, expressed in heart, lung, kidney, liver and intestines. Enriched in the hepatocytes around the central vein.

The protein localises to the lysosome membrane. The protein resides in the late endosome membrane. Its subcellular location is the endosome. It is found in the multivesicular body membrane. In terms of biological role, transmembrane protein that binds to and facilitates the assembly of lysosomal proton-transporting V-type ATPase (v-ATPase), resulting in enhanced lysosomal acidification and trafficking. By bringing the v-ATPase accessory protein ATP6AP2 and the v-ATPase subunit ATP6V0D1 together, allows v-ATPase complex formation and activation. TMEM9-controlled vesicular acidification induces hyperactivation of Wnt/beta-catenin signaling, involved in development, tissue homeostasis and tissue regeneration, through lysosomal degradation of adenomatous polyposis coli/APC. In the liver, involved in hepatic regeneration. The protein is Proton-transporting V-type ATPase complex assembly regulator TMEM9 of Mus musculus (Mouse).